Reading from the N-terminus, the 250-residue chain is Ubiquinone/menaquinone biosynthesis C-methyltransferase UbiE (250 aa).

Residues Thr74, Asp94, 122-123 (DA), and Ser139 each bind S-adenosyl-L-methionine.

This sequence belongs to the class I-like SAM-binding methyltransferase superfamily. MenG/UbiE family.

The enzyme catalyses a 2-demethylmenaquinol + S-adenosyl-L-methionine = a menaquinol + S-adenosyl-L-homocysteine + H(+). The catalysed reaction is a 2-methoxy-6-(all-trans-polyprenyl)benzene-1,4-diol + S-adenosyl-L-methionine = a 5-methoxy-2-methyl-3-(all-trans-polyprenyl)benzene-1,4-diol + S-adenosyl-L-homocysteine + H(+). The protein operates within quinol/quinone metabolism; menaquinone biosynthesis; menaquinol from 1,4-dihydroxy-2-naphthoate: step 2/2. Its pathway is cofactor biosynthesis; ubiquinone biosynthesis. Functionally, methyltransferase required for the conversion of demethylmenaquinol (DMKH2) to menaquinol (MKH2) and the conversion of 2-polyprenyl-6-methoxy-1,4-benzoquinol (DDMQH2) to 2-polyprenyl-3-methyl-6-methoxy-1,4-benzoquinol (DMQH2). The polypeptide is Ubiquinone/menaquinone biosynthesis C-methyltransferase UbiE (Cereibacter sphaeroides (strain ATCC 17029 / ATH 2.4.9) (Rhodobacter sphaeroides)).